The chain runs to 272 residues: Glutamate racemase (272 aa).

Residues Asp9–Ser10 and Tyr41–Gly42 contribute to the substrate site. Cys73 serves as the catalytic Proton donor/acceptor. Substrate is bound at residue Asn74 to Thr75. The active-site Proton donor/acceptor is the Cys183. Thr184–His185 serves as a coordination point for substrate.

It belongs to the aspartate/glutamate racemases family.

The enzyme catalyses L-glutamate = D-glutamate. The protein operates within cell wall biogenesis; peptidoglycan biosynthesis. Functionally, provides the (R)-glutamate required for cell wall biosynthesis. This Shewanella sp. (strain MR-4) protein is Glutamate racemase.